A 131-amino-acid chain; its full sequence is UPF0342 protein DSY1594 (131 aa).

This sequence belongs to the UPF0342 family.

This is UPF0342 protein DSY1594 from Desulfitobacterium hafniense (strain Y51).